The following is a 189-amino-acid chain: MTEYKLVVVGAGGVGKSALTIQLIQNHFVDEYDPTIEDSYRKQVVIDGETCLLDILDTAGQEEYSAMRDQYMRTGEGFLCVFAINNSKSFADINLYREQIKRVKDSDDVPMVLVGNKCDLPTRTVDTKQAHELAKSYGIPFIETSAKTRQGVEDAFYTLVREIRQYRLKKLNSSDDGTQGCMGSPCVLM.

GTP is bound by residues 10–18 (GAGGVGKSA) and 29–30 (VD). The Effector region motif lies at 32–40 (YDPTIEDSY). 57 to 61 (DTAGQ) contributes to the GTP binding site. Ser-89 bears the Phosphoserine mark. Residue 116-119 (NKCD) participates in GTP binding. A hypervariable region region spans residues 166 to 185 (YRLKKLNSSDDGTQGCMGSP). Residue Lys-170 forms a Glycyl lysine isopeptide (Lys-Gly) (interchain with G-Cter in ubiquitin) linkage. A lipid anchor (S-palmitoyl cysteine) is attached at Cys-181. Cys-186 carries the S-farnesyl cysteine lipid modification. The propeptide at 187-189 (VLM) is removed in mature form.

This sequence belongs to the small GTPase superfamily. Ras family. In terms of assembly, interacts (active GTP-bound form preferentially) with RGS14. Interacts (active GTP-bound form) with RASSF7. Interacts (active GTP-bound form) with both SHOC2 and PP1c (all isoforms) to form a tertiary complex; SHOC2 and PP1c preferably bind M-Ras/MRAS, but they also bind K-Ras/KRAS, N-Ras/NRAS and H-Ras/HRAS. Palmitoylated by the ZDHHC9-GOLGA7 complex. Depalmitoylated by ABHD17A, ABHD17B and ABHD17C. A continuous cycle of de- and re-palmitoylation regulates rapid exchange between plasma membrane and Golgi. In terms of processing, acetylation at Lys-104 prevents interaction with guanine nucleotide exchange factors (GEFs). Post-translationally, ubiquitinated by the BCR(LZTR1) E3 ubiquitin ligase complex at Lys-170 in a non-degradative manner, leading to inhibit Ras signaling by decreasing Ras association with membranes. Phosphorylation at Ser-89 enhances NRAS association with its downstream effectors.

The protein localises to the cell membrane. The protein resides in the golgi apparatus membrane. The catalysed reaction is GTP + H2O = GDP + phosphate + H(+). With respect to regulation, alternates between an inactive form bound to GDP and an active form bound to GTP. Activated by a guanine nucleotide-exchange factor (GEF) and inactivated by a GTPase-activating protein (GAP). Its function is as follows. Ras proteins bind GDP/GTP and possess intrinsic GTPase activity. This is GTPase NRas (Nras) from Mus musculus (Mouse).